The chain runs to 79 residues: Acyl carrier protein (79 aa).

The Carrier domain occupies 3-78 (QEILEKVCSI…DAVKFIEEKK (76 aa)). Serine 38 is subject to O-(pantetheine 4'-phosphoryl)serine.

This sequence belongs to the acyl carrier protein (ACP) family. 4'-phosphopantetheine is transferred from CoA to a specific serine of apo-ACP by AcpS. This modification is essential for activity because fatty acids are bound in thioester linkage to the sulfhydryl of the prosthetic group.

Its subcellular location is the cytoplasm. The protein operates within lipid metabolism; fatty acid biosynthesis. Its function is as follows. Carrier of the growing fatty acid chain in fatty acid biosynthesis. The protein is Acyl carrier protein of Prochlorococcus marinus (strain MIT 9312).